The following is a 62-amino-acid chain: uncharacterized protein (62 aa).

A coiled-coil region spans residues 28–61 (KIESTHPEIAKKLKEAAEKYREVEEILKKAVDMV).

This is an uncharacterized protein from Archaeoglobus fulgidus (strain ATCC 49558 / DSM 4304 / JCM 9628 / NBRC 100126 / VC-16).